Consider the following 441-residue polypeptide: Mitochondrial distribution and morphology protein 12 (441 aa).

Residues 1 to 441 (MSIDIDWERA…VYPSFWTFLV (441 aa)) form the SMP-LTD domain. Disordered stretches follow at residues 68–89 (DFYE…PMRE) and 183–289 (RAVT…RMRE). 2 stretches are compositionally biased toward polar residues: residues 226 to 245 (SRPS…SVST) and 253 to 263 (PSQTLLANNPG).

This sequence belongs to the MDM12 family. As to quaternary structure, component of the ER-mitochondria encounter structure (ERMES) or MDM complex, composed of MMM1, MDM10, MDM12 and MDM34. An MMM1 homodimer associates with one molecule of MDM12 on each side in a pairwise head-to-tail manner, and the SMP-LTD domains of MMM1 and MDM12 generate a continuous hydrophobic tunnel for phospholipid trafficking.

It is found in the mitochondrion outer membrane. Its subcellular location is the endoplasmic reticulum membrane. In terms of biological role, component of the ERMES/MDM complex, which serves as a molecular tether to connect the endoplasmic reticulum (ER) and mitochondria. Components of this complex are involved in the control of mitochondrial shape and protein biogenesis, and function in nonvesicular lipid trafficking between the ER and mitochondria. MDM12 is required for the interaction of the ER-resident membrane protein MMM1 and the outer mitochondrial membrane-resident beta-barrel protein MDM10. The MDM12-MMM1 subcomplex functions in the major beta-barrel assembly pathway that is responsible for biogenesis of all mitochondrial outer membrane beta-barrel proteins, and acts in a late step after the SAM complex. The MDM10-MDM12-MMM1 subcomplex further acts in the TOM40-specific pathway after the action of the MDM12-MMM1 complex. Essential for establishing and maintaining the structure of mitochondria and maintenance of mtDNA nucleoids. The chain is Mitochondrial distribution and morphology protein 12 from Paracoccidioides lutzii (strain ATCC MYA-826 / Pb01) (Paracoccidioides brasiliensis).